We begin with the raw amino-acid sequence, 847 residues long: DNA gyrase subunit A (847 aa).

The region spanning leucine 34–leucine 533 is the Topo IIA-type catalytic domain. The active-site O-(5'-phospho-DNA)-tyrosine intermediate is the tyrosine 122. Positions glutamine 560–glycine 566 match the GyrA-box motif.

The protein belongs to the type II topoisomerase GyrA/ParC subunit family. Heterotetramer, composed of two GyrA and two GyrB chains. In the heterotetramer, GyrA contains the active site tyrosine that forms a transient covalent intermediate with DNA, while GyrB binds cofactors and catalyzes ATP hydrolysis.

The protein localises to the cytoplasm. It carries out the reaction ATP-dependent breakage, passage and rejoining of double-stranded DNA.. Functionally, a type II topoisomerase that negatively supercoils closed circular double-stranded (ds) DNA in an ATP-dependent manner to modulate DNA topology and maintain chromosomes in an underwound state. Negative supercoiling favors strand separation, and DNA replication, transcription, recombination and repair, all of which involve strand separation. Also able to catalyze the interconversion of other topological isomers of dsDNA rings, including catenanes and knotted rings. Type II topoisomerases break and join 2 DNA strands simultaneously in an ATP-dependent manner. The sequence is that of DNA gyrase subunit A from Buchnera aphidicola subsp. Baizongia pistaciae (strain Bp).